The primary structure comprises 352 residues: Photosystem II D2 protein (352 aa).

A helical membrane pass occupies residues 40 to 60; that stretch reads CAFLSIGGWLTGTTFVTSWYT. His117 is a binding site for chlorophyll a. The chain crosses the membrane as a helical span at residues 124-140; sequence GFCLRQIEIARLVGIRP. Residues Gln129 and Asn142 each contribute to the pheophytin a site. A helical membrane pass occupies residues 152–165; sequence VFVSVFLMYPLGQS. A chlorophyll a-binding site is contributed by His197. Residues 207–227 traverse the membrane as a helical segment; that stretch reads GALLCAIHGATVENTLFQDGE. The a plastoquinone site is built by His214 and Phe261. Residue His214 coordinates Fe cation. His268 lines the Fe cation pocket. Residues 278 to 294 form a helical membrane-spanning segment; sequence GLWMSSIGIVGLAFNLR.

This sequence belongs to the reaction center PufL/M/PsbA/D family. As to quaternary structure, PSII is composed of 1 copy each of membrane proteins PsbA, PsbB, PsbC, PsbD, PsbE, PsbF, PsbH, PsbI, PsbJ, PsbK, PsbL, PsbM, PsbT, PsbX, PsbY, PsbZ, Psb30/Ycf12, peripheral proteins PsbO, CyanoQ (PsbQ), PsbU, PsbV and a large number of cofactors. It forms dimeric complexes. The D1/D2 heterodimer binds P680, chlorophylls that are the primary electron donor of PSII, and subsequent electron acceptors. It shares a non-heme iron and each subunit binds pheophytin, quinone, additional chlorophylls, carotenoids and lipids. There is also a Cl(-1) ion associated with D1 and D2, which is required for oxygen evolution. The PSII complex binds additional chlorophylls, carotenoids and specific lipids. is required as a cofactor.

It is found in the cellular thylakoid membrane. It catalyses the reaction 2 a plastoquinone + 4 hnu + 2 H2O = 2 a plastoquinol + O2. Its function is as follows. Photosystem II (PSII) is a light-driven water:plastoquinone oxidoreductase that uses light energy to abstract electrons from H(2)O, generating O(2) and a proton gradient subsequently used for ATP formation. It consists of a core antenna complex that captures photons, and an electron transfer chain that converts photonic excitation into a charge separation. The D1/D2 (PsbA/PsbD) reaction center heterodimer binds P680, the primary electron donor of PSII as well as several subsequent electron acceptors. D2 is needed for assembly of a stable PSII complex. This Trichodesmium erythraeum (strain IMS101) protein is Photosystem II D2 protein.